Here is a 445-residue protein sequence, read N- to C-terminus: Histamine H3 receptor (445 aa).

Residues 1–39 (MERAPPDGLMNASGALAGEAAAAGGARGFSAAWTAVLAA) are Extracellular-facing. N-linked (GlcNAc...) asparagine glycosylation is present at Asn-11. The helical transmembrane segment at 40–60 (LMALLIVATVLGNALVMLAFV) threads the bilayer. Over 61 to 70 (ADSSLRTQNN) the chain is Cytoplasmic. The chain crosses the membrane as a helical span at residues 71 to 91 (FFLLNLAISDFLVGAFCIPLY). Topologically, residues 92–108 (VPYVLTGRWTFGRGLCK) are extracellular. Cys-107 and Cys-188 are joined by a disulfide. The helical transmembrane segment at 109–129 (LWLVVDYLLCASSVFNIVLIS) threads the bilayer. Residues 130–156 (YDRFLSVTRAVSYRAQQGDTRRAVRKM) lie on the Cytoplasmic side of the membrane. Residues 157–177 (ALVWVLAFLLYGPAILSWEYL) traverse the membrane as a helical segment. The Extracellular segment spans residues 178-196 (SGGSSIPEGHCYAEFFYNW). The helical transmembrane segment at 197–217 (YFLITASTLEFFTPFLSVTFF) threads the bilayer. Topologically, residues 218–359 (NLSIYLNIQR…LSRDKKVAKS (142 aa)) are cytoplasmic. Disordered regions lie at residues 234-259 (DGGR…PSCW) and 273-336 (HRYG…LEKR). The segment covering 241 to 256 (PEPPPDAQPSPPPAPP) has biased composition (pro residues). Residues 289-299 (AGLGGGSGGGA) are compositionally biased toward gly residues. The segment covering 300–312 (AASPTSSSGSSSR) has biased composition (low complexity). A helical membrane pass occupies residues 360-380 (LAIIVSIFGLCWAPYTLLMII). Residues 381-396 (RAACHGHCVPDYWYET) lie on the Extracellular side of the membrane. Residues 397–417 (SFWLLWANSAVNPVLYPLCHY) traverse the membrane as a helical segment. The Cytoplasmic portion of the chain corresponds to 418 to 445 (SFRRAFTKLLCPQKLKVQPHGSLEQCWK). Ser-439 is modified (phosphoserine).

The protein belongs to the G-protein coupled receptor 1 family.

The protein localises to the cell membrane. The H3 subclass of histamine receptors could mediate the histamine signals in CNS and peripheral nervous system. Signals through the inhibition of adenylate cyclase and displays high constitutive activity (spontaneous activity in the absence of agonist). This Mus musculus (Mouse) protein is Histamine H3 receptor (Hrh3).